The sequence spans 532 residues: Muscarinic acetylcholine receptor M5 (532 aa).

Over 1-29 (MEGDSYHNATTVNGTPVYHQPLERHRLWE) the chain is Extracellular. A glycan (N-linked (GlcNAc...) asparagine) is linked at asparagine 8. The helical transmembrane segment at 30 to 53 (VISIAAVTAVVSLITIVGNVLVMI) threads the bilayer. Over 54–66 (SFKVNSQLKTVNN) the chain is Cytoplasmic. A helical membrane pass occupies residues 67-87 (YYLLSLACADLIIGIFSMNLY). Residues 88–104 (TTYILMGRWALGSLACD) are Extracellular-facing. Cysteine 103 and cysteine 183 are disulfide-bonded. Residues 105-126 (LWLALDYVASNASVMNLLVISF) traverse the membrane as a helical segment. The Cytoplasmic segment spans residues 127–146 (DRYFSITRPLTYRAKRTPKR). The helical transmembrane segment at 147–169 (AGVMIGLAWLISFILWAPAILCW) threads the bilayer. The Extracellular segment spans residues 170 to 191 (QYLVGKRTVPLDECQIQFLSEP). The chain crosses the membrane as a helical span at residues 192–214 (TITFGTAIAAFYIPVSVMTILYC). Residues 215 to 443 (RIYRETEKRT…LVKERKAAQT (229 aa)) are Cytoplasmic-facing. The tract at residues 262-365 (AQRERNQTSW…SDTPNYFLSP (104 aa)) is disordered. A compositionally biased stretch (low complexity) spans 269 to 281 (TSWSSSRRSASTS). A compositionally biased stretch (polar residues) spans 282-308 (GKPSQATDPSTNQAKAEQLTTCSSYPS). Residues 444–464 (LSAILLAFIITWTPYNIMVLV) form a helical membrane-spanning segment. Residues 465-478 (STFCDKCVPVTLWH) are Extracellular-facing. A helical membrane pass occupies residues 479-498 (LGYWLCYVNSTVNPICYALC). At 499–532 (NRTFRKTFKMLLLCRWKKKKVEEKLYWQGNSKLP) the chain is on the cytoplasmic side. Phosphothreonine occurs at positions 501 and 505.

Belongs to the G-protein coupled receptor 1 family. Muscarinic acetylcholine receptor subfamily. CHRM5 sub-subfamily.

The protein localises to the cell membrane. It localises to the postsynaptic cell membrane. In terms of biological role, the muscarinic acetylcholine receptor mediates various cellular responses, including inhibition of adenylate cyclase, breakdown of phosphoinositides and modulation of potassium channels through the action of G proteins. Primary transducing effect is Pi turnover. The protein is Muscarinic acetylcholine receptor M5 (CHRM5) of Macaca mulatta (Rhesus macaque).